The sequence spans 203 residues: uncharacterized protein (203 aa).

Residues 89–109 traverse the membrane as a helical segment; the sequence is CEIPFAACSVLSWSLPTIAAL.

It localises to the membrane. This is an uncharacterized protein from Saccharomyces cerevisiae (strain ATCC 204508 / S288c) (Baker's yeast).